A 172-amino-acid polypeptide reads, in one-letter code: Adenine phosphoribosyltransferase (172 aa).

The protein belongs to the purine/pyrimidine phosphoribosyltransferase family. In terms of assembly, homodimer.

Its subcellular location is the cytoplasm. The enzyme catalyses AMP + diphosphate = 5-phospho-alpha-D-ribose 1-diphosphate + adenine. It participates in purine metabolism; AMP biosynthesis via salvage pathway; AMP from adenine: step 1/1. Catalyzes a salvage reaction resulting in the formation of AMP, that is energically less costly than de novo synthesis. The sequence is that of Adenine phosphoribosyltransferase from Staphylococcus saprophyticus subsp. saprophyticus (strain ATCC 15305 / DSM 20229 / NCIMB 8711 / NCTC 7292 / S-41).